A 456-amino-acid polypeptide reads, in one-letter code: Histidine--tRNA ligase (456 aa).

This sequence belongs to the class-II aminoacyl-tRNA synthetase family. In terms of assembly, homodimer.

Its subcellular location is the cytoplasm. It catalyses the reaction tRNA(His) + L-histidine + ATP = L-histidyl-tRNA(His) + AMP + diphosphate + H(+). This Borreliella afzelii (strain PKo) (Borrelia afzelii) protein is Histidine--tRNA ligase.